We begin with the raw amino-acid sequence, 308 residues long: MADRSMPVPDGLAGMRVDTGLARLLGLSRTAAAALAEEGAVELNGVPAGKSDRLVSGALLQVRLPEAPAPLQNTPIDIEGMTILYSDDDIVAVDKPAAVAAHASVGWTGPTVLGGLAAAGYRITTSGVHERQGIVHRLDVGTSGVMVVAISERAYTVLKRAFKYRTVDKRYHALVQGHPDPSSGTIDAPIGRHRGHEWKFAITKNGRHSLTHYDTLEAFVAASLLDVHLETGRTHQIRVHFAALHHPCCGDLVYGADPKLAKRLGLDRQWLHARSLAFAHPADGRRVEIVSPYPADLQHALKILRGEG.

Residues 15 to 81 (MRVDTGLARL…QNTPIDIEGM (67 aa)) form the S4 RNA-binding domain. Asp-139 is an active-site residue.

Belongs to the pseudouridine synthase RluA family.

The catalysed reaction is a uridine in RNA = a pseudouridine in RNA. This is an uncharacterized protein from Mycobacterium tuberculosis (strain CDC 1551 / Oshkosh).